The following is a 421-amino-acid chain: 3-isopropylmalate dehydratase large subunit (421 aa).

The [4Fe-4S] cluster site is built by cysteine 302, cysteine 362, and cysteine 365.

The protein belongs to the aconitase/IPM isomerase family. LeuC type 2 subfamily. Heterodimer of LeuC and LeuD. [4Fe-4S] cluster serves as cofactor.

The enzyme catalyses (2R,3S)-3-isopropylmalate = (2S)-2-isopropylmalate. It functions in the pathway amino-acid biosynthesis; L-leucine biosynthesis; L-leucine from 3-methyl-2-oxobutanoate: step 2/4. Its function is as follows. Catalyzes the isomerization between 2-isopropylmalate and 3-isopropylmalate, via the formation of 2-isopropylmaleate. This Campylobacter concisus (strain 13826) protein is 3-isopropylmalate dehydratase large subunit.